Here is a 111-residue protein sequence, read N- to C-terminus: Mitochondrial import inner membrane translocase subunit TIM14 (111 aa).

The Mitochondrial intermembrane segment spans residues 1–3 (MTG). The chain crosses the membrane as a helical span at residues 4-24 (GLIAAGLGLAAVGFGARYVLR). Residues 25–111 (NQALIKKGME…AKDLMESTKS (87 aa)) lie on the Mitochondrial matrix side of the membrane. A J domain is found at 58 to 111 (EAAKILGITPSAKPAKIKDAHKKVMIVNHPDRGGSPYLAAKINEAKDLMESTKS).

The protein belongs to the TIM14 family. As to quaternary structure, probable component of the PAM complex at least composed of a mitochondrial HSP70 protein, GrpE, tim-44, tim-16 and tim-14.

It is found in the mitochondrion inner membrane. Its function is as follows. Probable component of the PAM complex, a complex required for the translocation of transit peptide-containing proteins from the inner membrane into the mitochondrial matrix in an ATP-dependent manner. May act as a co-chaperone that stimulate the ATP-dependent activity. This is Mitochondrial import inner membrane translocase subunit TIM14 (dnj-21) from Caenorhabditis briggsae.